We begin with the raw amino-acid sequence, 359 residues long: TGACG-sequence-specific DNA-binding protein TGA-1A (359 aa).

The segment covering 44–54 (KRLDNETEDTS) has biased composition (basic and acidic residues). The segment at 44-72 (KRLDNETEDTSHGTVGTSNRYEPETSKPV) is disordered. One can recognise a bZIP domain in the interval 72-135 (VEKVLRRLAQ…GGVDASQLSY (64 aa)). Residues 73 to 125 (EKVLRRLAQNREAARKSRLRKKAYVQQLENSKLKLIQLEQELERARKQGMCVG) are a coiled coil. Residues 74–94 (KVLRRLAQNREAARKSRLRKK) are basic motif. The segment at 100-114 (LENSKLKLIQLEQEL) is leucine-zipper. Residues 143-354 (TAVFDMEYGH…RVLSSQWATR (212 aa)) enclose the DOG1 domain.

It belongs to the bZIP family. In terms of assembly, binds DNA as a dimer.

Its subcellular location is the nucleus. Transcriptional activator that binds specifically to the DNA sequence 5'-TGACG-3'. Recognizes ocs elements like the as-1 motif of the cauliflower mosaic virus 35S promoter. Binding to the as-1-like cis elements mediate auxin- and salicylic acid-inducible transcription. Could also bind to the Hex-motif (5'-TGACGTGG-3') another cis-acting element found in plant histone promoters. The chain is TGACG-sequence-specific DNA-binding protein TGA-1A (TGA1A) from Nicotiana tabacum (Common tobacco).